The primary structure comprises 383 residues: Succinyl-diaminopimelate desuccinylase (383 aa).

Histidine 73 contributes to the Zn(2+) binding site. Residue aspartate 75 is part of the active site. Aspartate 107 is a Zn(2+) binding site. Residue glutamate 141 is the Proton acceptor of the active site. Zn(2+) contacts are provided by glutamate 142, glutamate 170, and histidine 356.

It belongs to the peptidase M20A family. DapE subfamily. Homodimer. The cofactor is Zn(2+). Requires Co(2+) as cofactor.

It carries out the reaction N-succinyl-(2S,6S)-2,6-diaminopimelate + H2O = (2S,6S)-2,6-diaminopimelate + succinate. Its pathway is amino-acid biosynthesis; L-lysine biosynthesis via DAP pathway; LL-2,6-diaminopimelate from (S)-tetrahydrodipicolinate (succinylase route): step 3/3. Its function is as follows. Catalyzes the hydrolysis of N-succinyl-L,L-diaminopimelic acid (SDAP), forming succinate and LL-2,6-diaminopimelate (DAP), an intermediate involved in the bacterial biosynthesis of lysine and meso-diaminopimelic acid, an essential component of bacterial cell walls. The chain is Succinyl-diaminopimelate desuccinylase from Pseudomonas syringae pv. tomato (strain ATCC BAA-871 / DC3000).